We begin with the raw amino-acid sequence, 944 residues long: 2-oxoglutarate dehydrogenase E1 component (944 aa).

Positions 915 to 944 (RRRSSPAEGDPTVHKKEQERIVSDSLTRKN) are disordered. A compositionally biased stretch (basic and acidic residues) spans 925–936 (PTVHKKEQERIV).

Belongs to the alpha-ketoglutarate dehydrogenase family. As to quaternary structure, homodimer. Part of the 2-oxoglutarate dehydrogenase (OGDH) complex composed of E1 (2-oxoglutarate dehydrogenase), E2 (dihydrolipoamide succinyltransferase) and E3 (dihydrolipoamide dehydrogenase); the complex contains multiple copies of the three enzymatic components (E1, E2 and E3). It depends on thiamine diphosphate as a cofactor.

It catalyses the reaction N(6)-[(R)-lipoyl]-L-lysyl-[protein] + 2-oxoglutarate + H(+) = N(6)-[(R)-S(8)-succinyldihydrolipoyl]-L-lysyl-[protein] + CO2. Functionally, E1 component of the 2-oxoglutarate dehydrogenase (OGDH) complex which catalyzes the decarboxylation of 2-oxoglutarate, the first step in the conversion of 2-oxoglutarate to succinyl-CoA and CO(2). This Bacillus velezensis (strain DSM 23117 / BGSC 10A6 / LMG 26770 / FZB42) (Bacillus amyloliquefaciens subsp. plantarum) protein is 2-oxoglutarate dehydrogenase E1 component.